The primary structure comprises 260 residues: Putative ABC transporter ATP-binding protein PH0132 (260 aa).

Residues isoleucine 2–proline 234 enclose the ABC transporter domain. Glycine 34–threonine 41 is a binding site for ATP.

Belongs to the ABC transporter superfamily.

It is found in the cell membrane. Probably part of an ABC transporter complex. Responsible for energy coupling to the transport system. The sequence is that of Putative ABC transporter ATP-binding protein PH0132 from Pyrococcus horikoshii (strain ATCC 700860 / DSM 12428 / JCM 9974 / NBRC 100139 / OT-3).